We begin with the raw amino-acid sequence, 150 residues long: D-aminoacyl-tRNA deacylase (150 aa).

A Gly-cisPro motif, important for rejection of L-amino acids motif is present at residues 136 to 137 (GP).

This sequence belongs to the DTD family. As to quaternary structure, homodimer.

It is found in the cytoplasm. The enzyme catalyses glycyl-tRNA(Ala) + H2O = tRNA(Ala) + glycine + H(+). It catalyses the reaction a D-aminoacyl-tRNA + H2O = a tRNA + a D-alpha-amino acid + H(+). Its function is as follows. An aminoacyl-tRNA editing enzyme that deacylates mischarged D-aminoacyl-tRNAs. Also deacylates mischarged glycyl-tRNA(Ala), protecting cells against glycine mischarging by AlaRS. Acts via tRNA-based rather than protein-based catalysis; rejects L-amino acids rather than detecting D-amino acids in the active site. By recycling D-aminoacyl-tRNA to D-amino acids and free tRNA molecules, this enzyme counteracts the toxicity associated with the formation of D-aminoacyl-tRNA entities in vivo and helps enforce protein L-homochirality. This Staphylococcus carnosus (strain TM300) protein is D-aminoacyl-tRNA deacylase.